The sequence spans 271 residues: MRFSVLLTGLAAAGSIATAERTCGAVPPRAYEKEFTEALNSLSPEAASADLTAGITIDTYLHVLTSGQTGNIPDSQLQAQINAMNQHYSQAGVQFRLVKATRTDNANWASGRDEAGMKKALHMGTYSSLNIYFIPNLSSGLLGICYFPRANPSQTTIIMDGCMVRSGTVPGGETTNYNQGKTATHEVGHFLGLYHVFSENGSCVDADMVADTPAQSKKTSGCPSSQDSCPGGGVDSIHNYMDYSYDVCMNQFTPGQANRIAQSWRAFRAGH.

An N-terminal signal peptide occupies residues M1–A19. N-linked (GlcNAc...) asparagine glycosylation is present at N136. H185 is a binding site for Zn(2+). Residue E186 is part of the active site. Position 189 (H189) interacts with Zn(2+). Residue N200 is glycosylated (N-linked (GlcNAc...) asparagine). A disulfide bridge links C222 with C248.

This sequence belongs to the peptidase M43B family.

Its subcellular location is the secreted. Functionally, secreted metalloproteinase that allows assimilation of proteinaceous substrates. Plays a pivotal role as a pathogenicity determinant during infections and contributes to the ability of the pathogen to persist within the mammalian host. This chain is Extracellular metalloprotease TRV_06892, found in Trichophyton verrucosum (strain HKI 0517).